Here is a 215-residue protein sequence, read N- to C-terminus: uncharacterized protein (215 aa).

Residues Gly53, Glu74, and Asp97 each coordinate S-adenosyl-L-methionine.

Belongs to the methyltransferase superfamily. YrrT family.

In terms of biological role, could be a S-adenosyl-L-methionine-dependent methyltransferase. This is an uncharacterized protein from Geobacillus kaustophilus (strain HTA426).